The sequence spans 765 residues: NADPH oxidase 5 (765 aa).

The N-terminal lobe of N-terminal regulatory EF domain stretch occupies residues 1–77 (MNTSGDPAQT…LFDSDRSGTI (77 aa)). The tract at residues 1 to 161 (MNTSGDPAQT…SCLRESAISL (161 aa)) is N-terminal regulatory EF domain. At 1–238 (MNTSGDPAQT…RAYWHNHRSQ (238 aa)) the chain is on the cytoplasmic side. 2 consecutive EF-hand domains span residues 26–56 (RWLRWVTQQFKTIAGEDGEISLQEFKAALHV) and 57–92 (KESFFAERFFALFDSDRSGTITLQELQEALTLLIHG). Ca(2+)-binding residues include D42, E44, E49, D70, D72, S74, T76, E81, and D106. The segment at 78-161 (TLQELQEALT…SCLRESAISL (84 aa)) is C-terminal lobe of N-terminal regulatory EF domain. The EF-hand 3; atypical; contains an insert of 28 residues domain occupies 93–156 (SPMDKLKFLF…RTVLQSCLRE (64 aa)). At I107 the chain carries S-nitrosocysteine. Ca(2+) is bound by residues D108, S138, S140, E145, D178, D180, N182, and E189. Positions 122-141 (GAGAGPHWASSPLGTGSGSI) are disordered. The EF-hand 4 domain occupies 165-200 (KLDQLTLALFESADADGNGAITFEELRDELQRFPGV). A helical transmembrane segment spans residues 239–259 (LFCLATYAGLHVLLFGLAASA). Position 246 is an S-nitrosocysteine (A246). Residues 260–266 (HRDLGAS) are Extracellular-facing. The chain crosses the membrane as a helical span at residues 267–289 (VMVAKGCGQCLNFDCSFIAVLML). The Cytoplasmic portion of the chain corresponds to 290 to 317 (RRCLTWLRATWLAQVLPLDQNIQFHQLM). The Ferric oxidoreductase domain occupies 293–440 (LTWLRATWLA…FLEKAIGLAV (148 aa)). A helical transmembrane segment spans residues 318 to 338 (GYVVVGLSLVHTVAHTVNFVL). At 339–362 (QAQAEASPFQFWELLLTTRPGIGW) the chain is on the extracellular side. The chain crosses the membrane as a helical span at residues 363–383 (VHGSASPTGVALLLLLLLMFI). At 384–394 (CSSSCIRRSGH) the chain is on the cytoplasmic side. Residues 395–417 (FEVFYWTHLSYLLVWLLLIFHGP) form a helical membrane-spanning segment. 2 C-terminal catalytic dehydrogenase domain regions span residues 398–719 (FYWT…GRPD) and 416–737 (GPNF…KVQV). The Extracellular portion of the chain corresponds to 418 to 434 (NFWKWLLVPGILFFLEK). Residues 435-455 (AIGLAVSRMAAVCIMEVNLLP) form a helical membrane-spanning segment. The 137-residue stretch at 441-577 (SRMAAVCIME…DGPYGTPTRR (137 aa)) folds into the FAD-binding FR-type domain. The Cytoplasmic portion of the chain corresponds to 456–583 (SKVTHLLIKR…PTRRIFASEH (128 aa)). D475 is modified (phosphoserine; by CaMK2). H490 carries the phosphothreonine; by PKC/PRKCA modification. Phosphothreonine; by CaMK2 and PKC/PRKCA is present on I494. Residue P498 is modified to Phosphoserine; by CaMK2 and PKC/PRKCA. At D502 the chain carries Phosphoserine; by CaMK2. Position 519 is an S-nitrosocysteine (Y519). Residues 584 to 604 (AVLIGAGIGITPFASILQSIM) traverse the membrane as a helical segment. The Extracellular portion of the chain corresponds to 605–765 (YRHQKRKHTC…FGFRFFQENF (161 aa)). The residue at position 659 (D659) is a Phosphoserine; by CaMK2. L694 is subject to S-nitrosocysteine.

As to quaternary structure, homooligomer. FAD is required as a cofactor. Mg(2+) serves as cofactor. In terms of processing, phosphorylation at Ser-475 by CaMK2 and at Ser-490, Thr-494 and Ser-498 by PKC/PRKCA positively regulates its catalytic activity. Post-translationally, S-nitrosylation in response to nitric oxide inhibits its catalytic activity. Mainly expressed in pachytene spermatocytes of testis and in lymphocyte-rich areas of spleen and lymph nodes. Also detected in ovary, placenta, pancreas, cardiac fibroblasts. Expressed in B-cells and prostate malignant cells. As to expression, expressed in spleen. Expressed in endothelial cells, pulmonary artery smooth muscle cells and epithelial colorectal adenocarcinoma cells. In terms of tissue distribution, expressed in microvascular endothelial cells (at protein level). Expressed in testis. Expressed in endothelial cells and pulmonary artery smooth muscle cells. Expressed in pulmonary artery smooth muscle cells and epithelial colorectal adenocarcinoma cells. As to expression, expressed in endothelial cells and pulmonary artery smooth muscle cells. In terms of tissue distribution, expressed in microvascular endothelial cells (at protein level).

The protein resides in the endoplasmic reticulum. It is found in the cell membrane. It catalyses the reaction NADPH + 2 O2 = 2 superoxide + NADP(+) + H(+). With respect to regulation, activated by calcium which induces conformational changes and interaction between the N-terminal regulatory region and the C-terminal catalytic region. Inhibited by diphenylene iodonium. Its function is as follows. Calcium-dependent NADPH oxidase that catalyzes the generation of superoxide from molecular oxygen utilizing NADPH as an electron donor. May play a role in cell growth and apoptosis. Calcium-dependent NADPH oxidase that catalyzes the generation of superoxide from molecular oxygen utilizing NADPH as an electron donor. Involved in endothelial generation of reactive oxygen species (ROS), proliferation and angiogenesis and contributes to endothelial response to thrombin. Regulates redox-dependent processes in lymphocytes and spermatozoa. Functionally, calcium-dependent NADPH oxidase that catalyzes the generation of superoxide from molecular oxygen utilizing NADPH as an electron donor. In terms of biological role, this isoform lacks calcium-binding domains and was showed to present a NADPH oxidase activity in a calcium-independent manner. May be involved in endothelial generation of reactive oxygen species (ROS), proliferation and angiogenesis and contribute to endothelial response to thrombin. However another study showed an absence of oxidase activity. Subject to rapid degradation. Its function is as follows. Lacks calcium-dependent NADPH oxidase activity. This Homo sapiens (Human) protein is NADPH oxidase 5.